Reading from the N-terminus, the 696-residue chain is UvrABC system protein B (696 aa).

Residues Glu45–Pro434 enclose the Helicase ATP-binding domain. Gly58–Thr65 contacts ATP. A Beta-hairpin motif is present at residues Tyr111–Val134. One can recognise a Helicase C-terminal domain in the interval Gln450–Ile616. Positions Gly647–Gln682 constitute a UVR domain.

This sequence belongs to the UvrB family. As to quaternary structure, forms a heterotetramer with UvrA during the search for lesions. Interacts with UvrC in an incision complex.

The protein resides in the cytoplasm. The UvrABC repair system catalyzes the recognition and processing of DNA lesions. A damage recognition complex composed of 2 UvrA and 2 UvrB subunits scans DNA for abnormalities. Upon binding of the UvrA(2)B(2) complex to a putative damaged site, the DNA wraps around one UvrB monomer. DNA wrap is dependent on ATP binding by UvrB and probably causes local melting of the DNA helix, facilitating insertion of UvrB beta-hairpin between the DNA strands. Then UvrB probes one DNA strand for the presence of a lesion. If a lesion is found the UvrA subunits dissociate and the UvrB-DNA preincision complex is formed. This complex is subsequently bound by UvrC and the second UvrB is released. If no lesion is found, the DNA wraps around the other UvrB subunit that will check the other stand for damage. This is UvrABC system protein B from Ralstonia nicotianae (strain ATCC BAA-1114 / GMI1000) (Ralstonia solanacearum).